Reading from the N-terminus, the 356-residue chain is NADH-quinone oxidoreductase subunit H (356 aa).

Transmembrane regions (helical) follow at residues 4 to 24 (ALIL…LTGV), 79 to 99 (LLAP…IPFG), 127 to 147 (GVLY…IAGW), 166 to 186 (ISYE…TGSL), 198 to 218 (MWNI…TAMF), 251 to 271 (FFLA…LLFF), 289 to 309 (FIGL…FIWV), and 329 to 349 (MIPW…YWKE).

This sequence belongs to the complex I subunit 1 family. In terms of assembly, NDH-1 is composed of 14 different subunits. Subunits NuoA, H, J, K, L, M, N constitute the membrane sector of the complex.

It localises to the cell inner membrane. The enzyme catalyses a quinone + NADH + 5 H(+)(in) = a quinol + NAD(+) + 4 H(+)(out). NDH-1 shuttles electrons from NADH, via FMN and iron-sulfur (Fe-S) centers, to quinones in the respiratory chain. The immediate electron acceptor for the enzyme in this species is believed to be ubiquinone. Couples the redox reaction to proton translocation (for every two electrons transferred, four hydrogen ions are translocated across the cytoplasmic membrane), and thus conserves the redox energy in a proton gradient. This subunit may bind ubiquinone. This chain is NADH-quinone oxidoreductase subunit H, found in Leptospira biflexa serovar Patoc (strain Patoc 1 / ATCC 23582 / Paris).